A 208-amino-acid chain; its full sequence is Neuroendocrine protein 7B2 (208 aa).

Residues 1 to 26 (MGMYSAIPLALPMVLLMVYGLTPSLG) form the signal peptide. The cysteines at positions 120 and 129 are disulfide-linked. Serine 204 bears the Phosphoserine mark.

Belongs to the 7B2 family. Interacts with pcsk2 early in the secretory pathway. Dissociation occurs at later stages. In terms of processing, proteolytically cleaved in the Golgi by a furin-like convertase to generate bioactive peptides. Sulfated on tyrosine residues.

The protein resides in the secreted. Acts as a molecular chaperone for pcsk2, preventing its premature activation in the regulated secretory pathway. Binds to inactive pcsk2 in the endoplasmic reticulum and facilitates its transport from there to later compartments of the secretory pathway where it is proteolytically matured and activated. Also required for cleavage of pcsk2 but does not appear to be involved in its folding. The protein is Neuroendocrine protein 7B2 (scg5.L) of Xenopus laevis (African clawed frog).